The chain runs to 390 residues: 2-deoxy-scyllo-inosose synthase (390 aa).

Residues Asp-42, Glu-73–Lys-76, Gly-105–Asn-109, Thr-129–Thr-130, Ser-140–Lys-142, and Lys-151–Asn-152 contribute to the NAD(+) site. Lys-142 is a catalytic residue. Position 184 (Glu-184) interacts with Co(2+). Glu-244 is an active-site residue. 2 residues coordinate Co(2+): His-247 and His-263. Residues Pro-371–Gly-390 form a disordered region.

Belongs to the sugar phosphate cyclases superfamily. DOI synthase family. Requires NAD(+) as cofactor. Co(2+) serves as cofactor.

The enzyme catalyses D-glucose 6-phosphate = 2-deoxy-L-scyllo-inosose + phosphate. Its pathway is metabolic intermediate biosynthesis; 2-deoxystreptamine biosynthesis; 2-deoxystreptamine from D-glucose 6-phosphate: step 1/4. It functions in the pathway antibiotic biosynthesis; kanamycin biosynthesis. In terms of biological role, catalyzes the intramolecular carbocycle formation from D-glucose-6-phosphate to 2-deoxy-scyllo-inosose (DOI). The sequence is that of 2-deoxy-scyllo-inosose synthase (kanC) from Streptomyces kanamyceticus.